Reading from the N-terminus, the 323-residue chain is Beta-ketoacyl-[acyl-carrier-protein] synthase III (323 aa).

Residues Cys112 and His249 contribute to the active site. The tract at residues 250 to 254 is ACP-binding; sequence QANYR. Residue Asn279 is part of the active site.

The protein belongs to the thiolase-like superfamily. FabH family. In terms of assembly, homodimer.

It localises to the cytoplasm. It catalyses the reaction malonyl-[ACP] + acetyl-CoA + H(+) = 3-oxobutanoyl-[ACP] + CO2 + CoA. The protein operates within lipid metabolism; fatty acid biosynthesis. Functionally, catalyzes the condensation reaction of fatty acid synthesis by the addition to an acyl acceptor of two carbons from malonyl-ACP. Catalyzes the first condensation reaction which initiates fatty acid synthesis and may therefore play a role in governing the total rate of fatty acid production. Possesses both acetoacetyl-ACP synthase and acetyl transacylase activities. Its substrate specificity determines the biosynthesis of branched-chain and/or straight-chain of fatty acids. The chain is Beta-ketoacyl-[acyl-carrier-protein] synthase III from Clostridium kluyveri (strain NBRC 12016).